Here is a 673-residue protein sequence, read N- to C-terminus: Methionine--tRNA ligase (673 aa).

A 'HIGH' region motif is present at residues 13 to 23; that stretch reads PYANGSIHLGH. 4 residues coordinate Zn(2+): C144, C147, C157, and C160. The 'KMSKS' region signature appears at 330-334; sequence KMSKS. ATP is bound at residue K333. The tRNA-binding domain occupies 572 to 673; the sequence is DFAQLDLRIA…GRARAGMTIS (102 aa).

Belongs to the class-I aminoacyl-tRNA synthetase family. MetG type 1 subfamily. In terms of assembly, homodimer. It depends on Zn(2+) as a cofactor.

It is found in the cytoplasm. It catalyses the reaction tRNA(Met) + L-methionine + ATP = L-methionyl-tRNA(Met) + AMP + diphosphate. Functionally, is required not only for elongation of protein synthesis but also for the initiation of all mRNA translation through initiator tRNA(fMet) aminoacylation. The sequence is that of Methionine--tRNA ligase from Dichelobacter nodosus (strain VCS1703A).